Here is a 149-residue protein sequence, read N- to C-terminus: Large ribosomal subunit protein bL9 (149 aa).

Belongs to the bacterial ribosomal protein bL9 family.

Binds to the 23S rRNA. In Vibrio vulnificus (strain CMCP6), this protein is Large ribosomal subunit protein bL9.